The chain runs to 263 residues: H-2 class II histocompatibility antigen, A-U beta chain (263 aa).

The signal sequence occupies residues 1-27 (MALQIPSLLLLAAVVVLMVLSSPGTEG). A beta-1 region spans residues 28–120 (GDSERHFVVQ…TEVPTSLRRL (93 aa)). Residues 28-224 (GDSERHFVVQ…RAQSESARSK (197 aa)) lie on the Extracellular side of the membrane. Disulfide bonds link cysteine 42–cysteine 104 and cysteine 143–cysteine 199. An N-linked (GlcNAc...) asparagine glycan is attached at asparagine 46. The segment at 121–214 (EQPNVVISLS…SLKSPITVEW (94 aa)) is beta-2. The Ig-like C1-type domain occupies 123-211 (PNVVISLSRT…EHPSLKSPIT (89 aa)). The connecting peptide stretch occupies residues 215–224 (RAQSESARSK). A helical transmembrane segment spans residues 225-245 (MLSGIGGCVLGVIFLGLGLFI). At 246–263 (RHRSQKGPRGPPPAGLLQ) the chain is on the cytoplasmic side.

It belongs to the MHC class II family.

Its subcellular location is the membrane. In Mus musculus (Mouse), this protein is H-2 class II histocompatibility antigen, A-U beta chain.